Consider the following 809-residue polypeptide: Acyl-homoserine lactone acylase QuiP (809 aa).

Positions 1-26 (MASPAFSHFLPRFGVAAAVASALSLA) are cleaved as a signal peptide. Residue serine 261 is the Nucleophile of the active site.

The protein belongs to the peptidase S45 family. In terms of assembly, heterodimer of an alpha subunit and a beta subunit processed from the same precursor.

Its subcellular location is the periplasm. The catalysed reaction is an N-acyl-L-homoserine lactone + H2O = L-homoserine lactone + a carboxylate. Catalyzes the deacylation of acyl-homoserine lactone (AHL or acyl-HSL), releasing homoserine lactone (HSL) and the corresponding fatty acid. Possesses a specificity for the degradation of long-chain acyl-HSLs (side chains of seven or more carbons in length). The chain is Acyl-homoserine lactone acylase QuiP (quiP) from Pseudomonas fluorescens (strain ATCC BAA-477 / NRRL B-23932 / Pf-5).